The sequence spans 314 residues: Ribosomal RNA large subunit methyltransferase F (314 aa).

It belongs to the methyltransferase superfamily. METTL16/RlmF family.

Its subcellular location is the cytoplasm. The enzyme catalyses adenosine(1618) in 23S rRNA + S-adenosyl-L-methionine = N(6)-methyladenosine(1618) in 23S rRNA + S-adenosyl-L-homocysteine + H(+). In terms of biological role, specifically methylates the adenine in position 1618 of 23S rRNA. The polypeptide is Ribosomal RNA large subunit methyltransferase F (Flavobacterium psychrophilum (strain ATCC 49511 / DSM 21280 / CIP 103535 / JIP02/86)).